A 162-amino-acid chain; its full sequence is Shikimate kinase (162 aa).

Residue 11-16 (GSGKSS) participates in ATP binding. Residue Ser15 participates in Mg(2+) binding. Substrate is bound by residues Asp33, Arg57, and Gly80. Arg116 is a binding site for ATP. Arg132 contacts substrate.

Belongs to the shikimate kinase family. In terms of assembly, monomer. Requires Mg(2+) as cofactor.

It localises to the cytoplasm. The enzyme catalyses shikimate + ATP = 3-phosphoshikimate + ADP + H(+). The protein operates within metabolic intermediate biosynthesis; chorismate biosynthesis; chorismate from D-erythrose 4-phosphate and phosphoenolpyruvate: step 5/7. Catalyzes the specific phosphorylation of the 3-hydroxyl group of shikimic acid using ATP as a cosubstrate. This Helicobacter acinonychis (strain Sheeba) protein is Shikimate kinase.